Reading from the N-terminus, the 417-residue chain is Acetyltransferase cdmC (417 aa).

Residue asparagine 64 is glycosylated (N-linked (GlcNAc...) asparagine). 3 helical membrane passes run 308-328, 357-377, and 389-409; these read IPDG…GYLV, GIFW…YPLL, and LVES…AFIL.

Belongs to the wax synthase family.

Its subcellular location is the membrane. The enzyme catalyses chrodrimanin A + acetyl-CoA = chrodrimanin B + CoA. The protein operates within secondary metabolite biosynthesis; terpenoid biosynthesis. Functionally, acetyltransferase; part of the gene cluster that mediates the biosynthesis of chrodrimanin B, a meroterpenoid that acts as a potent blocker of insect GABA-gated chloride channels. The first step of the pathway is the biosynthesis of 6-hydroxymellein by the polyketide synthase cdmE. The prenyltransferase cdmH acts as a 6-hydroxymellein 5-farnesyltransferase and produces the hydrophobic metabolite verruculide C. The FAD-dependent monooxygenase cdmI further converts verruculide C into verruculide B. The terpene cyclase cdmG then produced the pentacyclic molecule 3-hydroxypentacecilide A, the backbone structure of chrodrimanin B, via folding the farnesyl moiety of the substrate into the chair-boat conformation. The short-chain dehydrogenase/reductase cdmF functions as the 3-OH dehydrogenase that oxidizes the C-3 hydroxyl group of 3-hydroxypentacecilide A and produces chrodrimanin C, the dehydrogenated product of 3-hydroxypentacecilide A. The cytochrome P450 monooxygenase cdmJ then accepts both 3-hydroxypentacecilide A and chrodrimanin C and functions as a C-7-beta-hydroxylase to produce respectively chrodrimanin H and chrodrimanin F. The dioxygenase cdmA accepts chrodrimanin H to afford chrodrimanin E, which is further transformed to chrodrimanin A by the dioxygenase cdmD. CdmA can also accept chrodrimanin C as substrate to convert it into verruculide A, which is further converted into chrodrimanin T by cdmD. The last step of the biosynthesis is proposed to be performed by the acetyltransferase cdmC which acetylates chrodrimanin A to yield chrodrimanin B. The pathway may also lead to the production of additional shunt products, including chrodrimanins T and U. The protein is Acetyltransferase cdmC of Talaromyces verruculosus (Penicillium verruculosum).